A 278-amino-acid chain; its full sequence is MSSASFTTKALSVLAALTAASAPLVAASPAHALANARNVTGSSTTSDSIVRLHIGNTACTGTMITPTWAITARHCIPEGGIAGAAIGSSTLSQFQQVSQAILHPTADLALVELPNQASSNTVDLYGAHVQPGENGQAAGWGGYSAFGQNVAQQADVQIQRRVVNVPSPDRTAVLLEGTVSNGRLVPGDSGGPLYINGQLAGVLSMSTDVENDALDGTVGWYIPVAEHAEWIAYYTGKHIAPIAGAPAELVDATANPTFIPAPQPFTGSSIGGWALGSS.

The first 32 residues, 1-32, serve as a signal peptide directing secretion; that stretch reads MSSASFTTKALSVLAALTAASAPLVAASPAHA. One can recognise a Peptidase S1 domain in the interval 33 to 236; it reads LANARNVTGS…HAEWIAYYTG (204 aa). Cys59 and Cys75 are disulfide-bonded. Catalysis depends on charge relay system residues His74, Asp123, and Ser189.

It belongs to the peptidase S1 family.

Its subcellular location is the secreted. The sequence is that of Putative peptidase Cgl1093 from Corynebacterium glutamicum (strain ATCC 13032 / DSM 20300 / JCM 1318 / BCRC 11384 / CCUG 27702 / LMG 3730 / NBRC 12168 / NCIMB 10025 / NRRL B-2784 / 534).